A 452-amino-acid polypeptide reads, in one-letter code: Glycylpeptide N-tetradecanoyltransferase (452 aa).

Tetradecanoyl-CoA-binding positions include 38-41 (YKFW), 171-173 (LCI), and 179-183 (SKRLA). The active-site Proton acceptor; via carboxylate is Leu-452.

This sequence belongs to the NMT family. In terms of assembly, monomer.

Its subcellular location is the cytoplasm. The enzyme catalyses N-terminal glycyl-[protein] + tetradecanoyl-CoA = N-tetradecanoylglycyl-[protein] + CoA + H(+). In terms of biological role, adds a myristoyl group to the N-terminal glycine residue of certain cellular proteins. The chain is Glycylpeptide N-tetradecanoyltransferase (NMT1) from Eremothecium gossypii (strain ATCC 10895 / CBS 109.51 / FGSC 9923 / NRRL Y-1056) (Yeast).